A 383-amino-acid polypeptide reads, in one-letter code: WAT1-related protein At3g18200 (383 aa).

A compositionally biased stretch (basic residues) spans 1-16 (MCYQTSKKKRRSRKRR). A disordered region spans residues 1-23 (MCYQTSKKKRRSRKRRAQEEKEK). Helical transmembrane passes span 33-53 (VKLVVALITLQFCFAGFHIVS), 65-85 (VYPVYRNLLALLLIGPFAYFF), 91-111 (PPLTISLLAQFFFLALIGITA), 126-146 (TFASAMQNSVPAITFIMACAL), 158-178 (GVAKVLGTLVSIGGATVITLY), 204-224 (LTLGWLYLMGHCLSWAGWMVL), 237-257 (TLTSFTCFFGLIQFLVIALFV), 272-292 (LFTILYAGIIASGLVVYLQTW), 300-320 (VFVAVFQPLQTLLVAAMAFLI), and 325-345 (LYSGGIVGAVFIMLGLYLVLW). EamA domains follow at residues 44 to 173 (FCFA…GGAT) and 216 to 344 (LSWA…YLVL).

Belongs to the drug/metabolite transporter (DMT) superfamily. Plant drug/metabolite exporter (P-DME) (TC 2.A.7.4) family.

The protein localises to the membrane. The polypeptide is WAT1-related protein At3g18200 (Arabidopsis thaliana (Mouse-ear cress)).